The primary structure comprises 244 residues: ATP synthase subunit a (244 aa).

Helical transmembrane passes span 17-37, 75-95, 112-132, 170-190, and 221-241; these read LTNILMITVASVIVLLIAILT, FLALGVTLLMYIFVSNMLGLP, DPAITLTLAVMVVALTHYYGV, LYGNIFAGEILLGLLAGLATS, and GAIQAFIFTMLTMVYMSHKIS.

The protein belongs to the ATPase A chain family. As to quaternary structure, F-type ATPases have 2 components, CF(1) - the catalytic core - and CF(0) - the membrane proton channel. CF(1) has five subunits: alpha(3), beta(3), gamma(1), delta(1), epsilon(1). CF(0) has three main subunits: a(1), b(2) and c(9-12). The alpha and beta chains form an alternating ring which encloses part of the gamma chain. CF(1) is attached to CF(0) by a central stalk formed by the gamma and epsilon chains, while a peripheral stalk is formed by the delta and b chains. The F(1)F(0) complex interacts with SpoIIIJ and YqjG; YqgA is found in the same complex.

It localises to the cell membrane. Functionally, key component of the proton channel; it plays a direct role in the translocation of protons across the membrane. The protein is ATP synthase subunit a of Bacillus subtilis (strain 168).